The sequence spans 257 residues: Ribonuclease HII (257 aa).

Residues 72–257 enclose the RNase H type-2 domain; the sequence is TYIAGIDEVG…FAPIKDMIQK (186 aa). The a divalent metal cation site is built by D78, E79, and D170.

This sequence belongs to the RNase HII family. The cofactor is Mn(2+). Requires Mg(2+) as cofactor.

Its subcellular location is the cytoplasm. It catalyses the reaction Endonucleolytic cleavage to 5'-phosphomonoester.. Endonuclease that specifically degrades the RNA of RNA-DNA hybrids. In Bacillus cereus (strain ATCC 14579 / DSM 31 / CCUG 7414 / JCM 2152 / NBRC 15305 / NCIMB 9373 / NCTC 2599 / NRRL B-3711), this protein is Ribonuclease HII.